The primary structure comprises 348 residues: Uroporphyrinogen decarboxylase (348 aa).

Substrate contacts are provided by residues 29–33 (RQAGR), D79, Y155, T210, and H326.

The protein belongs to the uroporphyrinogen decarboxylase family. Homodimer.

It is found in the cytoplasm. The enzyme catalyses uroporphyrinogen III + 4 H(+) = coproporphyrinogen III + 4 CO2. The protein operates within porphyrin-containing compound metabolism; protoporphyrin-IX biosynthesis; coproporphyrinogen-III from 5-aminolevulinate: step 4/4. In terms of biological role, catalyzes the decarboxylation of four acetate groups of uroporphyrinogen-III to yield coproporphyrinogen-III. This Rhodospirillum rubrum (strain ATCC 11170 / ATH 1.1.1 / DSM 467 / LMG 4362 / NCIMB 8255 / S1) protein is Uroporphyrinogen decarboxylase.